The chain runs to 498 residues: MNDINLFLAKLTYTSAKLTILPEIILILGLVAVVVIDLLSKGKNTFLLYKISMVTLLASAVILLWQWGFFTAYERSHARDFGNIFRFFLLICSLLSISSSVDYILCSKMSLAEFLLFKLAAGLGGMVLSCANDLVTIYVSLEFLALSSCFLSGYTKRDMRSNEATMKFLLMSGASSSLLLYGFSLLYGLSGGQLQLDKIVDGIIFNRYGSIIYLSAAFTTAGTAFKLSLFPFHQWTPDVYEGSPTPVVAFFSVTSKVAALALFTRLFGLIFPYFSNEWHVAVGLLATFSMILGNLIAVTQRSVKRMLAFSSISQIGYIMIGVLSADSGNGYASMITYTFIYILMNLGTFACITLFGLRTGTDNIRDYAGLYMKDPVLTFSLVLCLLSLGGMPPLSGFFGKLYLFWHGWKAGLYSLVLVALVTSVISIYYYLKIIKLMFTGKSGRSDTPLNSRQNSLVSLSISISKNSLEIAMIICALASTLSGIFIDPIIEITRNTFF.

14 consecutive transmembrane segments (helical) span residues 18 to 38 (LTIL…VIDL), 51 to 71 (ISMV…GFFT), 87 to 107 (FFLL…ILCS), 111 to 131 (LAEF…LSCA), 134 to 154 (LVTI…LSGY), 168 to 188 (FLLM…LLYG), 211 to 231 (IIYL…SLFP), 244 to 264 (PTPV…ALFT), 278 to 298 (WHVA…LIAV), 306 to 326 (MLAF…LSAD), 337 to 357 (YTFI…LFGL), 379 to 399 (FSLV…GFFG), 411 to 431 (GLYS…YYYL), and 470 to 490 (IAMI…DPII).

This sequence belongs to the complex I subunit 2 family. NDH is composed of at least 16 different subunits, 5 of which are encoded in the nucleus.

Its subcellular location is the plastid. It is found in the chloroplast thylakoid membrane. It catalyses the reaction a plastoquinone + NADH + (n+1) H(+)(in) = a plastoquinol + NAD(+) + n H(+)(out). The catalysed reaction is a plastoquinone + NADPH + (n+1) H(+)(in) = a plastoquinol + NADP(+) + n H(+)(out). In terms of biological role, NDH shuttles electrons from NAD(P)H:plastoquinone, via FMN and iron-sulfur (Fe-S) centers, to quinones in the photosynthetic chain and possibly in a chloroplast respiratory chain. The immediate electron acceptor for the enzyme in this species is believed to be plastoquinone. Couples the redox reaction to proton translocation, and thus conserves the redox energy in a proton gradient. In Adiantum capillus-veneris (Maidenhair fern), this protein is NAD(P)H-quinone oxidoreductase subunit 2, chloroplastic.